We begin with the raw amino-acid sequence, 471 residues long: Probable anion transporter 5, chloroplastic (471 aa).

The transit peptide at M1 to R59 directs the protein to the chloroplast. Residues P56 to G76 are disordered. The next 4 membrane-spanning stretches (helical) occupy residues P62 to L82, I103 to P123, V162 to I182, and L185 to F205. Residues G63–G76 are compositionally biased toward gly residues. Residues G226–S247 are disordered. Over residues S228–S247 the composition is skewed to low complexity. Transmembrane regions (helical) follow at residues V270 to W290, A307 to F327, I348 to P368, I371 to C391, I403 to T423, and I435 to F455.

The protein belongs to the major facilitator superfamily. Sodium/anion cotransporter (TC 2.A.1.14) family.

The protein localises to the plastid. It is found in the chloroplast membrane. In terms of biological role, probable anion transporter. In Oryza sativa subsp. japonica (Rice), this protein is Probable anion transporter 5, chloroplastic (PHT4;5).